Consider the following 334-residue polypeptide: N-acetyl-gamma-glutamyl-phosphate reductase (334 aa).

The active site involves Cys142.

It belongs to the NAGSA dehydrogenase family. Type 1 subfamily.

It localises to the cytoplasm. It catalyses the reaction N-acetyl-L-glutamate 5-semialdehyde + phosphate + NADP(+) = N-acetyl-L-glutamyl 5-phosphate + NADPH + H(+). It functions in the pathway amino-acid biosynthesis; L-arginine biosynthesis; N(2)-acetyl-L-ornithine from L-glutamate: step 3/4. Catalyzes the NADPH-dependent reduction of N-acetyl-5-glutamyl phosphate to yield N-acetyl-L-glutamate 5-semialdehyde. The polypeptide is N-acetyl-gamma-glutamyl-phosphate reductase (Pelodictyon phaeoclathratiforme (strain DSM 5477 / BU-1)).